We begin with the raw amino-acid sequence, 189 residues long: Anthranilate synthase component 2 (189 aa).

A Glutamine amidotransferase type-1 domain is found at 1–189 (MILIIDNYDS…QLLKNFLDSD (189 aa)). 52-54 (GPG) lines the L-glutamine pocket. Cys79 serves as the catalytic Nucleophile; for GATase activity. L-glutamine is bound by residues Gln83 and 129 to 130 (SL). Residues His169 and Glu171 contribute to the active site.

In terms of assembly, tetramer of two components I and two components II.

The protein resides in the plastid. The protein localises to the chloroplast. It catalyses the reaction chorismate + L-glutamine = anthranilate + pyruvate + L-glutamate + H(+). The protein operates within amino-acid biosynthesis; L-tryptophan biosynthesis; L-tryptophan from chorismate: step 1/5. In Porphyra purpurea (Red seaweed), this protein is Anthranilate synthase component 2 (trpG).